The sequence spans 142 residues: Transcriptional regulator MraZ (142 aa).

2 consecutive SpoVT-AbrB domains span residues 5–47 (EYPY…PLAS) and 76–119 (ANKA…NPGR).

Belongs to the MraZ family. In terms of assembly, forms oligomers.

It localises to the cytoplasm. It is found in the nucleoid. This is Transcriptional regulator MraZ from Deinococcus deserti (strain DSM 17065 / CIP 109153 / LMG 22923 / VCD115).